Consider the following 217-residue polypeptide: Large ribosomal subunit protein uL1 (217 aa).

The protein belongs to the universal ribosomal protein uL1 family. As to quaternary structure, part of the 50S ribosomal subunit.

Binds directly to 23S rRNA. The L1 stalk is quite mobile in the ribosome, and is involved in E site tRNA release. In terms of biological role, protein L1 is also a translational repressor protein, it controls the translation of the L11 operon by binding to its mRNA. The polypeptide is Large ribosomal subunit protein uL1 (Anaplasma marginale (strain St. Maries)).